Reading from the N-terminus, the 319-residue chain is NADH-quinone oxidoreductase subunit H 1 (319 aa).

9 helical membrane passes run 1-21, 77-97, 107-127, 147-167, 179-199, 214-234, 238-258, 262-282, and 293-313; these read MIGL…LLVV, ILAP…VAFG, VGVL…MLGA, LAYE…AGSL, VWFV…GVAA, LVAG…FLGE, VLLV…GPWL, IWFG…RATL, and FAWK…GIVV.

Belongs to the complex I subunit 1 family. NDH-1 is composed of 14 different subunits. Subunits NuoA, H, J, K, L, M, N constitute the membrane sector of the complex.

It localises to the cell inner membrane. The catalysed reaction is a quinone + NADH + 5 H(+)(in) = a quinol + NAD(+) + 4 H(+)(out). Functionally, NDH-1 shuttles electrons from NADH, via FMN and iron-sulfur (Fe-S) centers, to quinones in the respiratory chain. The immediate electron acceptor for the enzyme in this species is believed to be ubiquinone. Couples the redox reaction to proton translocation (for every two electrons transferred, four hydrogen ions are translocated across the cytoplasmic membrane), and thus conserves the redox energy in a proton gradient. This subunit may bind ubiquinone. The polypeptide is NADH-quinone oxidoreductase subunit H 1 (Rhodopseudomonas palustris (strain HaA2)).